Consider the following 358-residue polypeptide: NADH-quinone oxidoreductase subunit H (358 aa).

The next 8 helical transmembrane spans lie at 20-40 (ITVG…IPLI), 95-115 (ALFY…WAVI), 128-148 (IGLL…IIAG), 168-188 (ISYE…SGSM), 206-226 (VFSW…ISAV), 253-273 (GFAF…IAAL), 295-315 (TPSA…YLWI), and 334-354 (VLIP…ISPL).

The protein belongs to the complex I subunit 1 family. In terms of assembly, NDH-1 is composed of 14 different subunits. Subunits NuoA, H, J, K, L, M, N constitute the membrane sector of the complex.

It localises to the cell inner membrane. The catalysed reaction is a quinone + NADH + 5 H(+)(in) = a quinol + NAD(+) + 4 H(+)(out). Its function is as follows. NDH-1 shuttles electrons from NADH, via FMN and iron-sulfur (Fe-S) centers, to quinones in the respiratory chain. The immediate electron acceptor for the enzyme in this species is believed to be ubiquinone. Couples the redox reaction to proton translocation (for every two electrons transferred, four hydrogen ions are translocated across the cytoplasmic membrane), and thus conserves the redox energy in a proton gradient. This subunit may bind ubiquinone. The chain is NADH-quinone oxidoreductase subunit H from Neisseria gonorrhoeae (strain ATCC 700825 / FA 1090).